The chain runs to 115 residues: MKNKFVELVEKSQIRTDLPEFNPGDSITVNLWIKEGDKQRIQAFKGFVLRKRNRGLHSAFTVRKMSSGMGVERTFQTHSPLIDSITVEKRADVRRAKLYYMRGLTGKAARIKEKV.

It belongs to the bacterial ribosomal protein bL19 family.

In terms of biological role, this protein is located at the 30S-50S ribosomal subunit interface and may play a role in the structure and function of the aminoacyl-tRNA binding site. This is Large ribosomal subunit protein bL19 from Francisella philomiragia subsp. philomiragia (strain ATCC 25017 / CCUG 19701 / FSC 153 / O#319-036).